Here is a 1027-residue protein sequence, read N- to C-terminus: Protein translocase subunit SecA (1027 aa).

Residues Gln-143, 161-165, and Asp-661 each bind ATP; that span reads GEGKT. Residues 981–1027 are disordered; it reads EESGTSNADNAGDNGPQTVIAEKKPGRNDLCPCGSGKKYKNCHGQQP. Zn(2+) contacts are provided by Cys-1011, Cys-1013, Cys-1022, and His-1023.

The protein belongs to the SecA family. As to quaternary structure, monomer and homodimer. Part of the essential Sec protein translocation apparatus which comprises SecA, SecYEG and auxiliary proteins SecDF. Other proteins may also be involved. Zn(2+) is required as a cofactor.

It is found in the cell inner membrane. The protein resides in the cytoplasm. The catalysed reaction is ATP + H2O + cellular proteinSide 1 = ADP + phosphate + cellular proteinSide 2.. Functionally, part of the Sec protein translocase complex. Interacts with the SecYEG preprotein conducting channel. Has a central role in coupling the hydrolysis of ATP to the transfer of proteins into and across the cell membrane, serving as an ATP-driven molecular motor driving the stepwise translocation of polypeptide chains across the membrane. This Chlorobium limicola (strain DSM 245 / NBRC 103803 / 6330) protein is Protein translocase subunit SecA.